The primary structure comprises 330 residues: Sulfate/thiosulfate import ATP-binding protein CysA (330 aa).

Residues 3–237 (IEIRNINKQF…PASEFVYHFL (235 aa)) enclose the ABC transporter domain. 35 to 42 (GPSGCGKT) is an ATP binding site.

The protein belongs to the ABC transporter superfamily. Sulfate/tungstate importer (TC 3.A.1.6) family. In terms of assembly, the complex is composed of two ATP-binding proteins (CysA), two transmembrane proteins (CysT and CysW) and a solute-binding protein (CysP).

It is found in the cell inner membrane. The catalysed reaction is sulfate(out) + ATP + H2O = sulfate(in) + ADP + phosphate + H(+). The enzyme catalyses thiosulfate(out) + ATP + H2O = thiosulfate(in) + ADP + phosphate + H(+). In terms of biological role, part of the ABC transporter complex CysAWTP involved in sulfate/thiosulfate import. Responsible for energy coupling to the transport system. This chain is Sulfate/thiosulfate import ATP-binding protein CysA, found in Pectobacterium atrosepticum (strain SCRI 1043 / ATCC BAA-672) (Erwinia carotovora subsp. atroseptica).